The primary structure comprises 401 residues: uncharacterized protein (401 aa).

Position 242 is an N6-(pyridoxal phosphate)lysine (Lys242).

Belongs to the class-I pyridoxal-phosphate-dependent aminotransferase family. As to quaternary structure, homodimer. Pyridoxal 5'-phosphate is required as a cofactor.

Its subcellular location is the cytoplasm. This is an uncharacterized protein from Saccharolobus solfataricus (strain ATCC 35092 / DSM 1617 / JCM 11322 / P2) (Sulfolobus solfataricus).